A 317-amino-acid chain; its full sequence is MKQLQDEITQALTKLDGGSEFHEDSWERPEGGGGRSRVLRDGAIFEQAGVNFSEVWGSHLPPSILAQRPEAEGHGFYATGTSLVLHPRNPYVPTVHLNYRYFEAGPVWWFGGGADLTPYYPFAEDAAHFHQTLKLACDEHHPEYYPVFKRWCDEYFYLKHRDETRGVGGLFFDYQDGQGVLYRGPNPKGEAANYSNQVGEPASRDWEDLFSFIQGSGKAFLPAYVPIVERRHGMEYGDRQRNFQLYRRGRYVEFNLVYDRGTIFGLQTNGRTESILMSLPPLVRWEYGYQPEPNSPEAELYDTFLKPQDWSNWTANQ.

The segment at 38–47 is important for dimerization; that stretch reads VLRDGAIFEQ. Residue S82 participates in substrate binding. Residue H96 is the Proton donor of the active site. Substrate-binding positions include 98-100 and 269-274; these read NYR and NGRTES. The segment at 251-286 is important for dimerization; it reads YVEFNLVYDRGTIFGLQTNGRTESILMSLPPLVRWE.

The protein belongs to the aerobic coproporphyrinogen-III oxidase family. In terms of assembly, homodimer.

The protein localises to the cytoplasm. It carries out the reaction coproporphyrinogen III + O2 + 2 H(+) = protoporphyrinogen IX + 2 CO2 + 2 H2O. It participates in porphyrin-containing compound metabolism; protoporphyrin-IX biosynthesis; protoporphyrinogen-IX from coproporphyrinogen-III (O2 route): step 1/1. In terms of biological role, key enzyme in heme biosynthesis. Catalyzes the oxidative decarboxylation of propionic acid side chains of rings A and B of coproporphyrinogen III. This chain is Coproporphyrinogen-III oxidase, aerobic 1, found in Nostoc sp. (strain PCC 7120 / SAG 25.82 / UTEX 2576).